We begin with the raw amino-acid sequence, 302 residues long: UDP-N-acetylenolpyruvoylglucosamine reductase (302 aa).

In terms of domain architecture, FAD-binding PCMH-type spans 27–192 (KTGGPADYVA…VSVTFGLKPG (166 aa)). Arginine 171 is an active-site residue. The active-site Proton donor is the serine 221. Glutamate 291 is a catalytic residue.

Belongs to the MurB family. Requires FAD as cofactor.

The protein localises to the cytoplasm. The catalysed reaction is UDP-N-acetyl-alpha-D-muramate + NADP(+) = UDP-N-acetyl-3-O-(1-carboxyvinyl)-alpha-D-glucosamine + NADPH + H(+). It functions in the pathway cell wall biogenesis; peptidoglycan biosynthesis. Cell wall formation. The polypeptide is UDP-N-acetylenolpyruvoylglucosamine reductase (Lactiplantibacillus plantarum (strain ATCC BAA-793 / NCIMB 8826 / WCFS1) (Lactobacillus plantarum)).